We begin with the raw amino-acid sequence, 344 residues long: MTSIRLTQYSHGAGCGCKISPSVLDVMLKSSLALPVNDALLVGNSTKDDAAVFDIGNDQGVISTTDFFMPIVDDPTDFGKIAACNAISDIYAMGGKPIMAIAILGWPVNLLAPEIAQQVLDGARAICAEAGIPLAGGHSIDAPEPIFGLAVTGLINNAHIKRNNTAEVGDLLYLTKPLGIGIMTTAEKQGKLLPEHAQLAPQAMKTLNVIGQKFAELEVVTAMTDVTGFALLGHLLEMCQGSGVAAVIDFEQVPRLDFVNDYIDQGCVPGGCERNFISYGEHVGPLSPKQKILLCDPQTSGGLLVAVKPQGKEAFEALCQENGLNLQPIGELVAATSPTVSLLS.

The active site involves Cys-15. ATP contacts are provided by residues Lys-18 and 46–48 (TKD). Residue Asp-49 coordinates Mg(2+). Residues Asp-66, Asp-89, and 137–139 (GHS) contribute to the ATP site. Asp-89 serves as a coordination point for Mg(2+). Asp-225 contacts Mg(2+).

It belongs to the selenophosphate synthase 1 family. Class I subfamily. In terms of assembly, homodimer. The cofactor is Mg(2+).

The enzyme catalyses hydrogenselenide + ATP + H2O = selenophosphate + AMP + phosphate + 2 H(+). Its function is as follows. Synthesizes selenophosphate from selenide and ATP. The chain is Selenide, water dikinase from Colwellia psychrerythraea (strain 34H / ATCC BAA-681) (Vibrio psychroerythus).